A 387-amino-acid polypeptide reads, in one-letter code: Formate-dependent phosphoribosylglycinamide formyltransferase (387 aa).

Residues 12–13 (EL) and E72 each bind N(1)-(5-phospho-beta-D-ribosyl)glycinamide. Residues R104, K145, 150 to 155 (SSGKGQ), 185 to 188 (EEFI), and E193 contribute to the ATP site. One can recognise an ATP-grasp domain in the interval 109-300 (DLAAKDLKLL…EFELHIRAIL (192 aa)). Mg(2+) is bound by residues E258 and E270. N(1)-(5-phospho-beta-D-ribosyl)glycinamide is bound by residues D277, K348, and 355–356 (RR).

This sequence belongs to the PurK/PurT family. Homodimer.

It carries out the reaction N(1)-(5-phospho-beta-D-ribosyl)glycinamide + formate + ATP = N(2)-formyl-N(1)-(5-phospho-beta-D-ribosyl)glycinamide + ADP + phosphate + H(+). It functions in the pathway purine metabolism; IMP biosynthesis via de novo pathway; N(2)-formyl-N(1)-(5-phospho-D-ribosyl)glycinamide from N(1)-(5-phospho-D-ribosyl)glycinamide (formate route): step 1/1. Involved in the de novo purine biosynthesis. Catalyzes the transfer of formate to 5-phospho-ribosyl-glycinamide (GAR), producing 5-phospho-ribosyl-N-formylglycinamide (FGAR). Formate is provided by PurU via hydrolysis of 10-formyl-tetrahydrofolate. This Leptospira borgpetersenii serovar Hardjo-bovis (strain JB197) protein is Formate-dependent phosphoribosylglycinamide formyltransferase.